A 257-amino-acid polypeptide reads, in one-letter code: Phycoerythrobilin:ferredoxin oxidoreductase (257 aa).

It belongs to the HY2 family.

It carries out the reaction (3Z)-phycoerythrobilin + oxidized 2[4Fe-4S]-[ferredoxin] = 15,16-dihydrobiliverdin + reduced 2[4Fe-4S]-[ferredoxin] + 2 H(+). Functionally, catalyzes the two-electron reduction of the C2 and C3(1) diene system of 15,16-dihydrobiliverdin. This Synechococcus sp. (strain WH8020) protein is Phycoerythrobilin:ferredoxin oxidoreductase (pebB).